A 329-amino-acid chain; its full sequence is MSVLEESRPFAQQLSNVYFTILSLFCFKLFVKISLAILSHFYIVKGNRKEAARIAAEFYGVSQGQGSWADRSPLHEAASQGRLLALRTLLSQGYNVNAVTIDHVTPLHEACLGDHVACARTLLEAGANANAITIDGVTPLFNACSQGSASCAELLLEYGAKAQLESCFPSPTHEAASKGHHECLDILIAWGIDVDQDIPHLGTPLYVACMSQQFHCIWKLLYAGADVHKGKYWDTPLHAAAQQPSTEIVNLLLEFGADINAKNTDLLRPVDLATSNSAVERILLQHEATPSSLCQLCRLCIRNYIGRQRFHLIPQLQLPTLLQNFLQYR.

6 ANK repeats span residues 69–98 (ADRSPLHEAASQGRLLALRTLLSQGYNVNA), 102–131 (DHVTPLHEACLGDHVACARTLLEAGANANA), 135–164 (DGVTPLFNACSQGSASCAELLLEYGAKAQL), 167–196 (CFPSPTHEAASKGHHECLDILIAWGIDVDQ), 200–229 (HLGTPLYVACMSQQFHCIWKLLYAGADVHK), and 232–261 (YWDTPLHAAAQQPSTEIVNLLLEFGADINA). An SOCS box domain is found at 278-329 (AVERILLQHEATPSSLCQLCRLCIRNYIGRQRFHLIPQLQLPTLLQNFLQYR).

This sequence belongs to the ankyrin SOCS box (ASB) family.

Its pathway is protein modification; protein ubiquitination. Its function is as follows. May be a substrate-recognition component of a SCF-like ECS (Elongin-Cullin-SOCS-box protein) E3 ubiquitin-protein ligase complex which mediates the ubiquitination and subsequent proteasomal degradation of target proteins. May play a role in the initiation of arteriogenesis. The protein is Ankyrin repeat and SOCS box protein 5 (Asb5) of Mus musculus (Mouse).